Reading from the N-terminus, the 327-residue chain is GTPase Obg (327 aa).

The 159-residue stretch at Met-1–Leu-159 folds into the Obg domain. In terms of domain architecture, OBG-type G spans Ala-160–Ile-327. Residues Gly-166 to Ser-173, Phe-191 to Ile-195, Asp-213 to Gly-216, Asn-280 to Glu-283, and Ser-309 to Ser-311 contribute to the ATP site. Residues Ser-173 and Thr-193 each contribute to the Mg(2+) site.

The protein belongs to the TRAFAC class OBG-HflX-like GTPase superfamily. OBG GTPase family. In terms of assembly, monomer. Mg(2+) serves as cofactor.

The protein localises to the cytoplasm. Functionally, an essential GTPase which binds GTP, GDP and possibly (p)ppGpp with moderate affinity, with high nucleotide exchange rates and a fairly low GTP hydrolysis rate. Plays a role in control of the cell cycle, stress response, ribosome biogenesis and in those bacteria that undergo differentiation, in morphogenesis control. The protein is GTPase Obg of Prochlorococcus marinus (strain MIT 9215).